The chain runs to 473 residues: Photosystem II CP43 reaction center protein (473 aa).

Positions 1-14 (MKTLYSLRRFYPVE) are excised as a propeptide. Residue threonine 15 is modified to N-acetylthreonine. Threonine 15 is modified (phosphothreonine). A run of 5 helical transmembrane segments spans residues 69 to 93 (LFEV…PHLA), 134 to 155 (LLGP…KDRN), 178 to 200 (KALY…RKIT), 255 to 275 (KPFA…LSYS), and 291 to 312 (WFNN…ASQA). Glutamate 367 serves as a coordination point for [CaMn4O5] cluster. A helical transmembrane segment spans residues 447-471 (RARAAAAGFEKGIDRDFEPVLSMTP).

It belongs to the PsbB/PsbC family. PsbC subfamily. As to quaternary structure, PSII is composed of 1 copy each of membrane proteins PsbA, PsbB, PsbC, PsbD, PsbE, PsbF, PsbH, PsbI, PsbJ, PsbK, PsbL, PsbM, PsbT, PsbX, PsbY, PsbZ, Psb30/Ycf12, at least 3 peripheral proteins of the oxygen-evolving complex and a large number of cofactors. It forms dimeric complexes. Binds multiple chlorophylls and provides some of the ligands for the Ca-4Mn-5O cluster of the oxygen-evolving complex. It may also provide a ligand for a Cl- that is required for oxygen evolution. PSII binds additional chlorophylls, carotenoids and specific lipids. serves as cofactor.

The protein resides in the plastid. The protein localises to the chloroplast thylakoid membrane. Functionally, one of the components of the core complex of photosystem II (PSII). It binds chlorophyll and helps catalyze the primary light-induced photochemical processes of PSII. PSII is a light-driven water:plastoquinone oxidoreductase, using light energy to abstract electrons from H(2)O, generating O(2) and a proton gradient subsequently used for ATP formation. This chain is Photosystem II CP43 reaction center protein, found in Panax ginseng (Korean ginseng).